A 189-amino-acid polypeptide reads, in one-letter code: Thymidine kinase (189 aa).

Residues 9–16 (GTMNSGKS) and 85–88 (DEAQ) contribute to the ATP site. The Proton acceptor role is filled by Glu86. Residues Cys143, Cys146, Cys180, and His183 each coordinate Zn(2+).

Belongs to the thymidine kinase family. Homotetramer.

Its subcellular location is the cytoplasm. It carries out the reaction thymidine + ATP = dTMP + ADP + H(+). The protein is Thymidine kinase of Lactococcus lactis subsp. lactis (strain IL1403) (Streptococcus lactis).